We begin with the raw amino-acid sequence, 217 residues long: UPF0193 protein EVG1 (217 aa).

The protein belongs to the UPF0193 (EVG1) family.

The protein is UPF0193 protein EVG1 (C22orf23) of Homo sapiens (Human).